Consider the following 228-residue polypeptide: UPF0173 metal-dependent hydrolase BLi03080/BL00413 (228 aa).

Belongs to the UPF0173 family.

The protein is UPF0173 metal-dependent hydrolase BLi03080/BL00413 of Bacillus licheniformis (strain ATCC 14580 / DSM 13 / JCM 2505 / CCUG 7422 / NBRC 12200 / NCIMB 9375 / NCTC 10341 / NRRL NRS-1264 / Gibson 46).